A 135-amino-acid chain; its full sequence is CDGSH iron-sulfur domain-containing protein 2 (135 aa).

Residues 1 to 37 are Lumenal-facing; the sequence is MVLESVARIVKVQLPAYLKRLPVPESITGFARLTVSE. The helical transmembrane segment at 38–60 threads the bilayer; the sequence is WLRLLPFLGVLALLGYLAVRPFL. Residues 61-135 lie on the Cytoplasmic side of the membrane; sequence PKKKQQKDSL…GPLILKKKEV (75 aa). [2Fe-2S] cluster-binding residues include Cys99, Cys101, Cys110, and His114.

Belongs to the CISD protein family. CISD2 subfamily. Homodimer. Interacts with BCL2; the interaction is direct and disrupted by BIK interaction with BCL2. Interacts with BCL2L1. Interacts with ITPR1. [2Fe-2S] cluster serves as cofactor.

The protein localises to the endoplasmic reticulum membrane. Its subcellular location is the mitochondrion outer membrane. Regulator of autophagy that contributes to antagonize BECN1-mediated cellular autophagy at the endoplasmic reticulum. Participates in the interaction of BCL2 with BECN1 and is required for BCL2-mediated depression of endoplasmic reticulum Ca(2+) stores during autophagy. Contributes to BIK-initiated autophagy, while it is not involved in BIK-dependent activation of caspases. Involved in life span control, probably via its function as regulator of autophagy. The chain is CDGSH iron-sulfur domain-containing protein 2 (CISD2) from Bos taurus (Bovine).